Consider the following 393-residue polypeptide: CCA-adding enzyme (393 aa).

2 residues coordinate ATP: G27 and R30. Residues G27 and R30 each contribute to the CTP site. Mg(2+) contacts are provided by D40 and D42. Positions 111, 154, 157, 160, and 163 each coordinate ATP. Residues R111, D154, R157, R160, and R163 each coordinate CTP.

This sequence belongs to the tRNA nucleotidyltransferase/poly(A) polymerase family. Bacterial CCA-adding enzyme type 3 subfamily. Homodimer. It depends on Mg(2+) as a cofactor.

The catalysed reaction is a tRNA precursor + 2 CTP + ATP = a tRNA with a 3' CCA end + 3 diphosphate. The enzyme catalyses a tRNA with a 3' CCA end + 2 CTP + ATP = a tRNA with a 3' CCACCA end + 3 diphosphate. Functionally, catalyzes the addition and repair of the essential 3'-terminal CCA sequence in tRNAs without using a nucleic acid template. Adds these three nucleotides in the order of C, C, and A to the tRNA nucleotide-73, using CTP and ATP as substrates and producing inorganic pyrophosphate. tRNA 3'-terminal CCA addition is required both for tRNA processing and repair. Also involved in tRNA surveillance by mediating tandem CCA addition to generate a CCACCA at the 3' terminus of unstable tRNAs. While stable tRNAs receive only 3'-terminal CCA, unstable tRNAs are marked with CCACCA and rapidly degraded. This chain is CCA-adding enzyme, found in Listeria monocytogenes serotype 4b (strain CLIP80459).